The following is a 239-amino-acid chain: Leucine rich adaptor protein 1 (239 aa).

LRR repeat units follow at residues 55–83 and 93–114; these read LGDK…LVTL and LLEE…QYSL. Low complexity predominate over residues 107–116; sequence LTSSQYSLTG. 2 disordered regions span residues 107–139 and 200–219; these read LTSS…TDRL and KPPG…DESA. 4 positions are modified to phosphoserine: serine 118, serine 126, serine 129, and serine 213.

Forms a tripartite complex with CDC42BPA/CDC42BPB and MYO18A acting as an adapter connecting both. Its binding to CDC42BPA/CDC42BPB results in their activation by abolition of their negative autoregulation. Interacts with CDC42BPA and CDC42BPB.

The protein resides in the cytoplasm. Acts as an activator of the canonical NF-kappa-B pathway and drive the production of pro-inflammatory cytokines. Promotes the antigen (Ag)-presenting and priming function of dendritic cells via the canonical NF-kappa-B pathway. In concert with MYO18A and CDC42BPA/CDC42BPB, is involved in modulating lamellar actomyosin retrograde flow that is crucial to cell protrusion and migration. Activates CDC42BPA/CDC42BPB and targets it to actomyosin through its interaction with MYO18A, leading to MYL9/MLC2 phosphorylation and MYH9/MYH10-dependent actomyosin assembly in the lamella. The polypeptide is Leucine rich adaptor protein 1 (LURAP1) (Homo sapiens (Human)).